The primary structure comprises 394 residues: Elongation factor Tu (394 aa).

The tr-type G domain occupies 10–204 (KPHVNVGTIG…ALDSYIPEPE (195 aa)). Residues 19–26 (GHVDHGKT) are G1. 19–26 (GHVDHGKT) is a GTP binding site. Thr-26 provides a ligand contact to Mg(2+). The segment at 60–64 (GITIN) is G2. Residues 81-84 (DCPG) form a G3 region. Residues 81 to 85 (DCPGH) and 136 to 139 (NKCD) each bind GTP. The interval 136 to 139 (NKCD) is G4. The interval 174–176 (SAL) is G5.

It belongs to the TRAFAC class translation factor GTPase superfamily. Classic translation factor GTPase family. EF-Tu/EF-1A subfamily. In terms of assembly, monomer.

It is found in the cytoplasm. It carries out the reaction GTP + H2O = GDP + phosphate + H(+). GTP hydrolase that promotes the GTP-dependent binding of aminoacyl-tRNA to the A-site of ribosomes during protein biosynthesis. The chain is Elongation factor Tu from Shewanella sp. (strain ANA-3).